A 1004-amino-acid polypeptide reads, in one-letter code: Centriolar coiled-coil protein of 110 kDa (1004 aa).

The interval 1–221 (MEEYEEFCEK…SCLAEVTPDP (221 aa)) is CEP97 binding. A coiled-coil region spans residues 51–90 (EKRKKIQEEKQKALDVQSRKQANRKKALLTRVQEILENVQ). Residues 64-82 (LDVQSRKQANRKKALLTRV) are calmodulin-binding. The required for interaction with CEP290 stretch occupies residues 67 to 82 (QSRKQANRKKALLTRV). 2 disordered regions span residues 147-194 (PVNN…SSAS) and 239-279 (RELS…APPM). A Phosphoserine modification is found at Ser-170. Positions 243–252 (SRSLRNSLKR) are enriched in low complexity. The segment covering 253-276 (SVNETHSDRENDAAKASDCVKEKA) has biased composition (basic and acidic residues). The interval 349–564 (ENKVKSLKGP…QTQTSRQQMD (216 aa)) is interaction with CEP76. Residues Ser-364, Ser-370, and Ser-398 each carry the phosphoserine modification. A disordered region spans residues 401–433 (GKEEAVDRTAPAAAETTNESETVPKSPTDLTGV). Residues 415–433 (ETTNESETVPKSPTDLTGV) are compositionally biased toward polar residues. Residue Ser-550 is modified to Phosphoserine. The stretch at 641 to 699 (QELLKSKMLAFEEMRKRLEEQHAQQLSLLIAEQEREQEQLQKEIEEQEKMLKEKAVTTD) forms a coiled coil. Calmodulin-binding stretches follow at residues 773 to 813 (GRAQ…DKLK) and 901 to 916 (VALSVATQKSLDRKKF). The segment at 955–1004 (LSRQGTPKTSVKGVVQNRQKPSQSRVPNRAPVSGAYAGKTQRKRPNVATI) is disordered. Residues 970 to 980 (QNRQKPSQSRV) show a composition bias toward polar residues. A compositionally biased stretch (basic residues) spans 994 to 1004 (TQRKRPNVATI).

As to quaternary structure, interacts with CALM1, CETN2, CEP76, CEP104, CEP290 and TALPID3. Interacts with CEP97. Seems to associate with discrete CETN2, CEP97 and CEP290-containing complexes. Interacts with NEURL4 and CCNF; these interactions are not mutually exclusive and both lead to CCP110 ubiquitination and proteasome-dependent degradation. Via its interaction with NEURL4, may indirectly interact with HERC2. Interacts with KIF24, leading to its recruitment to centrioles. Interacts with USP20 and USP33. Interacts with MPHOSPH9. Interacts (via N-terminal region) with ENKD1 (via central region); ENKD1 competes with CEP97 for binding to CCP110, destabilizing the interaction between CP110 and CEP97 which promotes the removal of CCP110 and CEP97 from the mother centriole and allows the initiation of ciliogenesis. In terms of processing, phosphorylated by CDKs. Post-translationally, ubiquitinated by the SCF(CCNF) during G2 phase, leading to its degradation by the proteasome and preventing centrosome reduplication. Deubiquitinated by USP33 in S and G2/M phase, leading to stabilize CCP110 during the period which centrioles duplicate and elongate. Ubiquitinated by the EDVP complex, leading to its degradation.

The protein resides in the cytoplasm. Its subcellular location is the cytoskeleton. It is found in the microtubule organizing center. The protein localises to the centrosome. It localises to the centriole. The protein resides in the cilium basal body. Necessary for centrosome duplication at different stages of procentriole formation. Acts as a key negative regulator of ciliogenesis in collaboration with CEP97 by capping the mother centriole thereby preventing cilia formation. Also involved in promoting ciliogenesis. May play a role in the assembly of the mother centriole subdistal appendages (SDA) thereby effecting the fusion of recycling endosomes to basal bodies during cilia formation. Required for correct spindle formation and has a role in regulating cytokinesis and genome stability via cooperation with CALM1 and CETN2. This is Centriolar coiled-coil protein of 110 kDa (Ccp110) from Mus musculus (Mouse).